The sequence spans 291 residues: Undecaprenyl-diphosphatase 2 (291 aa).

6 consecutive transmembrane segments (helical) span residues P39–F59, A85–L105, I118–A138, F203–A223, P231–M251, and F262–L282.

It belongs to the UppP family.

It localises to the cell membrane. The enzyme catalyses di-trans,octa-cis-undecaprenyl diphosphate + H2O = di-trans,octa-cis-undecaprenyl phosphate + phosphate + H(+). Functionally, catalyzes the dephosphorylation of undecaprenyl diphosphate (UPP). Confers resistance to bacitracin. The chain is Undecaprenyl-diphosphatase 2 from Streptomyces avermitilis (strain ATCC 31267 / DSM 46492 / JCM 5070 / NBRC 14893 / NCIMB 12804 / NRRL 8165 / MA-4680).